We begin with the raw amino-acid sequence, 218 residues long: MVKYMKIVGITDLHGKLPPAVREFKDFADVLVVCGDITHFGKGIEVIEKLAELSDYMEVLCVPGNCDTKEVIDELNSFKLNIDRKVKKIENINFVGIGGSNKTPFNTPNEYTEEEIYNKLINVVKNLKNIFLVSHAPPYNTMADIVDLDKDIHVGSKSIRKIIEDFNENIRFCACGHIHESRCIDKIGNTIVVNPSPKSYFVYDTKKNMVVLDDFNGF.

This is an uncharacterized protein from Methanocaldococcus jannaschii (strain ATCC 43067 / DSM 2661 / JAL-1 / JCM 10045 / NBRC 100440) (Methanococcus jannaschii).